Here is a 526-residue protein sequence, read N- to C-terminus: Type 2 glycosyltransferase (526 aa).

The helical transmembrane segment at Pro25–Phe45 threads the bilayer. Asn298 and Asn317 each carry an N-linked (GlcNAc...) asparagine glycan. 3 helical membrane passes run Phe340–Trp360, Trp375–Ile395, and Phe403–Ile423. 2 N-linked (GlcNAc...) asparagine glycosylation sites follow: Asn426 and Asn517.

The protein belongs to the GT2 glycosyltransferase family.

Its subcellular location is the cell membrane. The protein resides in the secreted. It is found in the cell wall. In terms of biological role, glycosyltransferase involved in the maintenance of the outermost surface of the fungal cell wall. Likely functions in the synthesis of a currently unknown, potentially minor but widespread, extracellular or outer cell wall polysaccharide which plays a key role in facilitating many interactions between plants and fungi by enabling hyphal growth on solid matrices. This Gibberella zeae (strain ATCC MYA-4620 / CBS 123657 / FGSC 9075 / NRRL 31084 / PH-1) (Wheat head blight fungus) protein is Type 2 glycosyltransferase.